Here is a 253-residue protein sequence, read N- to C-terminus: Aminoglycoside nucleotidyltransferase (4') (253 aa).

In terms of assembly, homodimer.

The enzyme catalyses kanamycin A + ATP = 4'-adenylylkanamycin A + diphosphate. It catalyses the reaction amikacin + ATP = 4'-adenylylamikacin + diphosphate. It carries out the reaction neomycin B + ATP = 4'-adenylylneomycin B + diphosphate. The catalysed reaction is paromomycin + ATP = 4'-adenylylparomomycin + diphosphate. The enzyme catalyses ribostamycin + ATP = 4'-adenylylribostamycin + diphosphate. It catalyses the reaction tobramycin + ATP = 4'-adenylyltobramycin + diphosphate. It carries out the reaction kanamycin A + CTP = 4'-cytidylylkanamycin A + diphosphate. The catalysed reaction is kanamycin A + GTP = 4'-guanylylkanamycin A + diphosphate. The enzyme catalyses kanamycin A + ITP = 4'-inosinylylkanamycin A + diphosphate. It catalyses the reaction dTTP + kanamycin A = 4'-thymidylylkanamycin A + diphosphate. It carries out the reaction kanamycin A + UTP = 4'-uridylylkanamycin A + diphosphate. The catalysed reaction is kanamycin A + dATP = 4'-(2'-deoxyadenylyl)kanamycin A + diphosphate. The enzyme catalyses kanamycin A + dCTP = 4'-(2'-deoxycytidylyl)kanamycin A + diphosphate. It catalyses the reaction kanamycin A + dGTP = 4'-(2'-deoxyguanylyl)kanamycin A + diphosphate. It carries out the reaction dUTP + kanamycin A = 4'-(2'-deoxyuridylyl)kanamycin A + diphosphate. The catalysed reaction is amikacin + GTP = 4'-guanylylamikacin + diphosphate. The enzyme catalyses amikacin + ITP = 4'-inosinylylamikacin + diphosphate. It catalyses the reaction amikacin + CTP = 4'-cytidylylamikacin + diphosphate. It carries out the reaction amikacin + UTP = 4'-uridylylamikacin + diphosphate. The catalysed reaction is amikacin + dTTP = 4'-thymidylylamikacin + diphosphate. Functionally, inactivates aminoglycoside antibiotics such as kanamycin by catalyzing the transfer of a nucleotidyl group from nucleoside triphosphates such as (d)ATP to the 4'-hydroxyl group of the aminoglycoside. This is Aminoglycoside nucleotidyltransferase (4') from Bacillus sp.